Reading from the N-terminus, the 342-residue chain is Phosphate acyltransferase (342 aa).

The protein belongs to the PlsX family. Homodimer. Probably interacts with PlsY.

The protein resides in the cytoplasm. The enzyme catalyses a fatty acyl-[ACP] + phosphate = an acyl phosphate + holo-[ACP]. It participates in lipid metabolism; phospholipid metabolism. Catalyzes the reversible formation of acyl-phosphate (acyl-PO(4)) from acyl-[acyl-carrier-protein] (acyl-ACP). This enzyme utilizes acyl-ACP as fatty acyl donor, but not acyl-CoA. The polypeptide is Phosphate acyltransferase (Shewanella halifaxensis (strain HAW-EB4)).